A 208-amino-acid polypeptide reads, in one-letter code: Endoplasmic reticulum vesicle protein 25 (208 aa).

The signal sequence occupies residues 1 to 15 (MKFLLLLLLAPFISA). Topologically, residues 16 to 177 (LRFDLKAESK…TNESTNERVR (162 aa)) are lumenal. The GOLD domain maps to 28–118 (QMCIRDFVSE…KRAIELDIES (91 aa)). Residues 178 to 198 (NFSVLVIIVLTSLGAWQVNYL) form a helical membrane-spanning segment. Over 199-208 (KNYFKSKHII) the chain is Cytoplasmic.

This sequence belongs to the EMP24/GP25L family.

It localises to the endoplasmic reticulum membrane. It is found in the golgi apparatus membrane. Constituent of COPII-coated endoplasmic reticulum-derived transport vesicles. Required for efficient transport of a subset of secretory proteins to the Golgi. Facilitates retrograde transport from the Golgi to the endoplasmic reticulum. The polypeptide is Endoplasmic reticulum vesicle protein 25 (ERV25) (Candida glabrata (strain ATCC 2001 / BCRC 20586 / JCM 3761 / NBRC 0622 / NRRL Y-65 / CBS 138) (Yeast)).